The sequence spans 122 residues: Large ribosomal subunit protein uL14 (122 aa).

This sequence belongs to the universal ribosomal protein uL14 family. In terms of assembly, part of the 50S ribosomal subunit. Forms a cluster with proteins L3 and L19. In the 70S ribosome, L14 and L19 interact and together make contacts with the 16S rRNA in bridges B5 and B8.

Binds to 23S rRNA. Forms part of two intersubunit bridges in the 70S ribosome. In Aeromonas salmonicida (strain A449), this protein is Large ribosomal subunit protein uL14.